The sequence spans 55 residues: ATP synthase F(0) complex subunit 8 (55 aa).

The chain crosses the membrane as a helical span at residues 10-30 (FPIMMLSWLIFSLIIQPKLLL). A disordered region spans residues 35–55 (NPPSNKTTTTTRSNPWTWPWT). Residues 37-55 (PSNKTTTTTRSNPWTWPWT) show a composition bias toward low complexity.

Belongs to the ATPase protein 8 family. As to quaternary structure, component of the ATP synthase complex composed at least of ATP5F1A/subunit alpha, ATP5F1B/subunit beta, ATP5MC1/subunit c (homooctomer), MT-ATP6/subunit a, MT-ATP8/subunit 8, ATP5ME/subunit e, ATP5MF/subunit f, ATP5MG/subunit g, ATP5MK/subunit k, ATP5MJ/subunit j, ATP5F1C/subunit gamma, ATP5F1D/subunit delta, ATP5F1E/subunit epsilon, ATP5PF/subunit F6, ATP5PB/subunit b, ATP5PD/subunit d, ATP5PO/subunit OSCP. ATP synthase complex consists of a soluble F(1) head domain (subunits alpha(3) and beta(3)) - the catalytic core - and a membrane F(0) domain - the membrane proton channel (subunits c, a, 8, e, f, g, k and j). These two domains are linked by a central stalk (subunits gamma, delta, and epsilon) rotating inside the F1 region and a stationary peripheral stalk (subunits F6, b, d, and OSCP).

It is found in the mitochondrion membrane. Functionally, subunit 8, of the mitochondrial membrane ATP synthase complex (F(1)F(0) ATP synthase or Complex V) that produces ATP from ADP in the presence of a proton gradient across the membrane which is generated by electron transport complexes of the respiratory chain. ATP synthase complex consist of a soluble F(1) head domain - the catalytic core - and a membrane F(1) domain - the membrane proton channel. These two domains are linked by a central stalk rotating inside the F(1) region and a stationary peripheral stalk. During catalysis, ATP synthesis in the catalytic domain of F(1) is coupled via a rotary mechanism of the central stalk subunits to proton translocation. In vivo, can only synthesize ATP although its ATP hydrolase activity can be activated artificially in vitro. Part of the complex F(0) domain. In Opisthocomus hoazin (Hoatzin), this protein is ATP synthase F(0) complex subunit 8.